Here is a 685-residue protein sequence, read N- to C-terminus: Sorbicillinoid biosynthetic cluster transcription factor sor4 (685 aa).

Positions 1–14 (MGSSATATTTGEST) are enriched in low complexity. The segment at 1 to 20 (MGSSATATTTGESTRQQPGL) is disordered. Positions 22-49 (CEECRRRKARCDRVRPKCGICADSGRNC) form a DNA-binding region, zn(2)-C6 fungal-type. The segment at 81-112 (GQNDAPSLPQERDSLGCPTPSEKVSPEGDLVS) is disordered.

It is found in the nucleus. In terms of biological role, transcription factor that acts as the main regulator of the gene cluster that mediates the biosynthesis of sorbicillinoids, a diverse group of yellow secondary metabolites that restrict growth of competing pathogenic fungi but not of bacteria. This is Sorbicillinoid biosynthetic cluster transcription factor sor4 from Hypocrea jecorina (strain QM6a) (Trichoderma reesei).